Consider the following 189-residue polypeptide: Probable nicotinate-nucleotide adenylyltransferase (189 aa).

Belongs to the NadD family.

It catalyses the reaction nicotinate beta-D-ribonucleotide + ATP + H(+) = deamido-NAD(+) + diphosphate. Its pathway is cofactor biosynthesis; NAD(+) biosynthesis; deamido-NAD(+) from nicotinate D-ribonucleotide: step 1/1. Catalyzes the reversible adenylation of nicotinate mononucleotide (NaMN) to nicotinic acid adenine dinucleotide (NaAD). This is Probable nicotinate-nucleotide adenylyltransferase from Bacillus anthracis (strain CDC 684 / NRRL 3495).